The sequence spans 700 residues: Elongation factor G (700 aa).

Residues 8–290 form the tr-type G domain; the sequence is DKYRNIGISA…AVVELLPSPL (283 aa). GTP contacts are provided by residues 17-24, 88-92, and 142-145; these read AHIDAGKT, DTPGH, and NKMD.

It belongs to the TRAFAC class translation factor GTPase superfamily. Classic translation factor GTPase family. EF-G/EF-2 subfamily.

The protein resides in the cytoplasm. Its function is as follows. Catalyzes the GTP-dependent ribosomal translocation step during translation elongation. During this step, the ribosome changes from the pre-translocational (PRE) to the post-translocational (POST) state as the newly formed A-site-bound peptidyl-tRNA and P-site-bound deacylated tRNA move to the P and E sites, respectively. Catalyzes the coordinated movement of the two tRNA molecules, the mRNA and conformational changes in the ribosome. The protein is Elongation factor G of Polynucleobacter necessarius subsp. necessarius (strain STIR1).